We begin with the raw amino-acid sequence, 423 residues long: 3-phosphoshikimate 1-carboxyvinyltransferase (423 aa).

Residues K20, S21, and R25 each coordinate 3-phosphoshikimate. A phosphoenolpyruvate-binding site is contributed by K20. Phosphoenolpyruvate is bound by residues G91 and R119. T163, S164, Q165, D305, Q328, and K332 together coordinate 3-phosphoshikimate. Q165 contributes to the phosphoenolpyruvate binding site. Residue D305 is the Proton acceptor of the active site. R336 and R377 together coordinate phosphoenolpyruvate.

The protein belongs to the EPSP synthase family. As to quaternary structure, monomer.

The protein localises to the cytoplasm. The catalysed reaction is 3-phosphoshikimate + phosphoenolpyruvate = 5-O-(1-carboxyvinyl)-3-phosphoshikimate + phosphate. Its pathway is metabolic intermediate biosynthesis; chorismate biosynthesis; chorismate from D-erythrose 4-phosphate and phosphoenolpyruvate: step 6/7. Catalyzes the transfer of the enolpyruvyl moiety of phosphoenolpyruvate (PEP) to the 5-hydroxyl of shikimate-3-phosphate (S3P) to produce enolpyruvyl shikimate-3-phosphate and inorganic phosphate. This chain is 3-phosphoshikimate 1-carboxyvinyltransferase, found in Acetivibrio thermocellus (strain ATCC 27405 / DSM 1237 / JCM 9322 / NBRC 103400 / NCIMB 10682 / NRRL B-4536 / VPI 7372) (Clostridium thermocellum).